The sequence spans 272 residues: Phosphate import ATP-binding protein PstB 1 (272 aa).

The region spanning 26-267 (ISIENLNLFY…PMKKQTEDYI (242 aa)) is the ABC transporter domain. 58–65 (GPSGCGKS) is an ATP binding site.

It belongs to the ABC transporter superfamily. Phosphate importer (TC 3.A.1.7) family. The complex is composed of two ATP-binding proteins (PstB), two transmembrane proteins (PstC and PstA) and a solute-binding protein (PstS).

The protein localises to the cell inner membrane. It carries out the reaction phosphate(out) + ATP + H2O = ADP + 2 phosphate(in) + H(+). Part of the ABC transporter complex PstSACB involved in phosphate import. Responsible for energy coupling to the transport system. This is Phosphate import ATP-binding protein PstB 1 from Vibrio parahaemolyticus serotype O3:K6 (strain RIMD 2210633).